The primary structure comprises 122 residues: Mth938 domain-containing protein (122 aa).

Positions 6-122 (IASLSWGQMK…RVGGVFHSTC (117 aa)) are MTH138-like domain.

The protein belongs to the AAMDC family. Widely expressed, with high expression in the adipose tissue and skeletal muscle (at protein level).

Its subcellular location is the cytoplasm. Functionally, may play a role in preadipocyte differentiation and adipogenesis. This Mus musculus (Mouse) protein is Mth938 domain-containing protein (Aamdc).